The chain runs to 326 residues: MTNQERAEEPVLRHDWTQGEAEALFALPFNELLFQAQTIHRRHFDPNEVQVSSLLSIKTGACSEDCAYCPQSAHYETGVKRESLMSLEDVLEAAQRAREEGATRFCMGAAWRSPRDGDLEAIAAMVEGVKALGMETCVTAGMLSDEQARRLKEAGLDYYNHNLDTSESYYGEIITTRTYQDRLDTLQRVRDAGMHVCCGGIVGMGESAADRAGLLIGLANLPRHPESVPINLLVRVEGTPLADTAALDPFDFVRTVAVARIMMPASRVRLSAGRSDMSDEMQALCFLAGANSIFYGDRLLTTENPQAQRDRRLFARLGLRMAGLGC.

The Radical SAM core domain maps to 47-274 (NEVQVSSLLS…ASRVRLSAGR (228 aa)). Cys62, Cys66, and Cys69 together coordinate [4Fe-4S] cluster. [2Fe-2S] cluster is bound by residues Cys106, Cys137, Cys197, and Arg269.

This sequence belongs to the radical SAM superfamily. Biotin synthase family. Homodimer. It depends on [4Fe-4S] cluster as a cofactor. [2Fe-2S] cluster is required as a cofactor.

The catalysed reaction is (4R,5S)-dethiobiotin + (sulfur carrier)-SH + 2 reduced [2Fe-2S]-[ferredoxin] + 2 S-adenosyl-L-methionine = (sulfur carrier)-H + biotin + 2 5'-deoxyadenosine + 2 L-methionine + 2 oxidized [2Fe-2S]-[ferredoxin]. It functions in the pathway cofactor biosynthesis; biotin biosynthesis; biotin from 7,8-diaminononanoate: step 2/2. Functionally, catalyzes the conversion of dethiobiotin (DTB) to biotin by the insertion of a sulfur atom into dethiobiotin via a radical-based mechanism. This Methylococcus capsulatus (strain ATCC 33009 / NCIMB 11132 / Bath) protein is Biotin synthase.